The primary structure comprises 134 residues: Ribonuclease VapC (134 aa).

Positions 4–124 constitute a PINc domain; that stretch reads IVDTSIIIAL…NTKDFKRIPE (121 aa). Asp6 is a binding site for Mg(2+).

It belongs to the PINc/VapC protein family. Requires Mg(2+) as cofactor.

Functionally, toxic component of a type II toxin-antitoxin (TA) system. Has ssRNase activity. Its RNase activity is partially neutralized by cognate antitoxin VapB. Rapidly induces apoptosis upon microinjection into mouse fibroblasts (L929 line). Probably contributes to host cell death if bacterial cell lysis occurs during host infection. In Rickettsia bellii (strain RML369-C), this protein is Ribonuclease VapC.